Consider the following 150-residue polypeptide: Large ribosomal subunit protein uL13 (150 aa).

Belongs to the universal ribosomal protein uL13 family. In terms of assembly, part of the 50S ribosomal subunit.

Its function is as follows. This protein is one of the early assembly proteins of the 50S ribosomal subunit, although it is not seen to bind rRNA by itself. It is important during the early stages of 50S assembly. This is Large ribosomal subunit protein uL13 from Mesoplasma florum (strain ATCC 33453 / NBRC 100688 / NCTC 11704 / L1) (Acholeplasma florum).